Here is a 143-residue protein sequence, read N- to C-terminus: Transcriptional regulator MraZ (143 aa).

SpoVT-AbrB domains follow at residues 5-47 and 76-119; these read SHTP…PLAE and ASDD…DSQR.

The protein belongs to the MraZ family. Forms oligomers.

It localises to the cytoplasm. Its subcellular location is the nucleoid. The sequence is that of Transcriptional regulator MraZ from Parafrankia sp. (strain EAN1pec).